A 426-amino-acid polypeptide reads, in one-letter code: Serine--tRNA ligase (426 aa).

231–233 (TSE) serves as a coordination point for L-serine. 262–264 (RSE) is an ATP binding site. Glutamate 285 contacts L-serine. 349 to 352 (EISS) is an ATP binding site. Serine 385 contacts L-serine.

The protein belongs to the class-II aminoacyl-tRNA synthetase family. Type-1 seryl-tRNA synthetase subfamily. Homodimer. The tRNA molecule binds across the dimer.

The protein localises to the cytoplasm. The enzyme catalyses tRNA(Ser) + L-serine + ATP = L-seryl-tRNA(Ser) + AMP + diphosphate + H(+). It carries out the reaction tRNA(Sec) + L-serine + ATP = L-seryl-tRNA(Sec) + AMP + diphosphate + H(+). Its pathway is aminoacyl-tRNA biosynthesis; selenocysteinyl-tRNA(Sec) biosynthesis; L-seryl-tRNA(Sec) from L-serine and tRNA(Sec): step 1/1. Its function is as follows. Catalyzes the attachment of serine to tRNA(Ser). Is also able to aminoacylate tRNA(Sec) with serine, to form the misacylated tRNA L-seryl-tRNA(Sec), which will be further converted into selenocysteinyl-tRNA(Sec). The protein is Serine--tRNA ligase of Legionella pneumophila (strain Paris).